We begin with the raw amino-acid sequence, 202 residues long: GTP cyclohydrolase 1 (202 aa).

Residues Cys-90, His-93, and Cys-163 each contribute to the Zn(2+) site.

This sequence belongs to the GTP cyclohydrolase I family. As to quaternary structure, homomer.

It carries out the reaction GTP + H2O = 7,8-dihydroneopterin 3'-triphosphate + formate + H(+). The protein operates within cofactor biosynthesis; 7,8-dihydroneopterin triphosphate biosynthesis; 7,8-dihydroneopterin triphosphate from GTP: step 1/1. In Mycolicibacterium gilvum (strain PYR-GCK) (Mycobacterium gilvum (strain PYR-GCK)), this protein is GTP cyclohydrolase 1.